The sequence spans 430 residues: Trigger factor (430 aa).

The 86-residue stretch at 157–242 folds into the PPIase FKBP-type domain; it reads GDLVALETWS…AVEVSEPVLP (86 aa).

This sequence belongs to the FKBP-type PPIase family. Tig subfamily.

The protein resides in the cytoplasm. It carries out the reaction [protein]-peptidylproline (omega=180) = [protein]-peptidylproline (omega=0). Its function is as follows. Involved in protein export. Acts as a chaperone by maintaining the newly synthesized protein in an open conformation. Functions as a peptidyl-prolyl cis-trans isomerase. The sequence is that of Trigger factor from Xanthomonas campestris pv. campestris (strain B100).